We begin with the raw amino-acid sequence, 342 residues long: DNA primase small subunit PriS (342 aa).

Active-site residues include D97, D99, and D276.

The protein belongs to the eukaryotic-type primase small subunit family. As to quaternary structure, heterodimer of a small subunit (PriS) and a large subunit (PriL). It depends on Mg(2+) as a cofactor. The cofactor is Mn(2+).

Functionally, catalytic subunit of DNA primase, an RNA polymerase that catalyzes the synthesis of short RNA molecules used as primers for DNA polymerase during DNA replication. The small subunit contains the primase catalytic core and has DNA synthesis activity on its own. Binding to the large subunit stabilizes and modulates the activity, increasing the rate of DNA synthesis while decreasing the length of the DNA fragments, and conferring RNA synthesis capability. The DNA polymerase activity may enable DNA primase to also catalyze primer extension after primer synthesis. May also play a role in DNA repair. The protein is DNA primase small subunit PriS of Thermococcus sibiricus (strain DSM 12597 / MM 739).